We begin with the raw amino-acid sequence, 130 residues long: Small ribosomal subunit protein uS8 (130 aa).

Belongs to the universal ribosomal protein uS8 family. As to quaternary structure, part of the 30S ribosomal subunit.

Functionally, one of the primary rRNA binding proteins, it binds directly to 16S rRNA central domain where it helps coordinate assembly of the platform of the 30S subunit. This Caldivirga maquilingensis (strain ATCC 700844 / DSM 13496 / JCM 10307 / IC-167) protein is Small ribosomal subunit protein uS8.